Here is a 312-residue protein sequence, read N- to C-terminus: Malate dehydrogenase (312 aa).

NAD(+) is bound by residues 12–17 (GAGFTG) and Asp-36. Substrate-binding residues include Arg-87 and Arg-93. Residues Asn-100 and 123–125 (LTN) contribute to the NAD(+) site. Asn-125 contacts substrate. Ser-149 is modified (phosphoserine). Arg-156 contacts substrate. The active-site Proton acceptor is His-180.

The protein belongs to the LDH/MDH superfamily. MDH type 3 family.

It carries out the reaction (S)-malate + NAD(+) = oxaloacetate + NADH + H(+). In terms of biological role, catalyzes the reversible oxidation of malate to oxaloacetate. This Bacillus cytotoxicus (strain DSM 22905 / CIP 110041 / 391-98 / NVH 391-98) protein is Malate dehydrogenase.